The chain runs to 1350 residues: Ubiquitin carboxyl-terminal hydrolase 47 (1350 aa).

The disordered stretch occupies residues 111 to 138 (DGEQPQLTSDESGTADSSGLDDSSQEKF). Residues 115–132 (PQLTSDESGTADSSGLDD) show a composition bias toward polar residues. One can recognise a USP domain in the interval 173–548 (VGLVNQAMTC…NAYMLMYRLK (376 aa)). The active-site Nucleophile is the C182. The tract at residues 409 to 437 (EDEKSPQTDSCTDSGAENEGSCHSDQMSN) is disordered. Polar residues predominate over residues 415 to 437 (QTDSCTDSGAENEGSCHSDQMSN). The active-site Proton acceptor is H487. 2 disordered regions span residues 815-836 (HPRPTARSVGPKGGGDMNPQED) and 859-1000 (SLQQ…ESGK). Residues 859 to 877 (SLQQHQDGGNGDSSKSTEG) are compositionally biased toward polar residues. The span at 916-926 (PEERSDSDVNN) shows a compositional bias: basic and acidic residues. Positions 929–945 (STSSVDSDILSSSHSSD) are enriched in low complexity. Residues 973-982 (KANDGKKETW) show a composition bias toward basic and acidic residues. Positions 983–996 (DTAEEDSGTDSEYD) are enriched in acidic residues.

This sequence belongs to the peptidase C19 family. USP47 subfamily.

The protein localises to the cytoplasm. It carries out the reaction Thiol-dependent hydrolysis of ester, thioester, amide, peptide and isopeptide bonds formed by the C-terminal Gly of ubiquitin (a 76-residue protein attached to proteins as an intracellular targeting signal).. Functionally, ubiquitin-specific protease that specifically deubiquitinates monoubiquitinated DNA polymerase beta (polb), stabilizing polb thereby playing a role in base-excision repair (BER). This is Ubiquitin carboxyl-terminal hydrolase 47 (usp47) from Xenopus laevis (African clawed frog).